Here is a 237-residue protein sequence, read N- to C-terminus: Ribonuclease PH (237 aa).

Phosphate contacts are provided by residues arginine 86 and 124-126 (GTR).

This sequence belongs to the RNase PH family. In terms of assembly, homohexameric ring arranged as a trimer of dimers.

The catalysed reaction is tRNA(n+1) + phosphate = tRNA(n) + a ribonucleoside 5'-diphosphate. In terms of biological role, phosphorolytic 3'-5' exoribonuclease that plays an important role in tRNA 3'-end maturation. Removes nucleotide residues following the 3'-CCA terminus of tRNAs; can also add nucleotides to the ends of RNA molecules by using nucleoside diphosphates as substrates, but this may not be physiologically important. Probably plays a role in initiation of 16S rRNA degradation (leading to ribosome degradation) during starvation. This Nitrobacter hamburgensis (strain DSM 10229 / NCIMB 13809 / X14) protein is Ribonuclease PH.